A 151-amino-acid chain; its full sequence is Arginine repressor (151 aa).

The protein belongs to the ArgR family.

It localises to the cytoplasm. It functions in the pathway amino-acid biosynthesis; L-arginine biosynthesis [regulation]. Its function is as follows. Regulates arginine biosynthesis genes. The chain is Arginine repressor from Moorella thermoacetica (strain ATCC 39073 / JCM 9320).